Reading from the N-terminus, the 330-residue chain is Agamous-like MADS-box protein AGL75 (330 aa).

In terms of domain architecture, MADS-box spans 19 to 61 (TSLSNRLETIFKKASELCTLCDIEACVIYYGPDGELKTWPKEK).

As to quaternary structure, interacts with MEE14/CBP1.

Its subcellular location is the nucleus. Probable transcription factor that may function in the maintenance of the proper function of the central cell in pollen tube attraction. This is Agamous-like MADS-box protein AGL75 from Arabidopsis thaliana (Mouse-ear cress).